We begin with the raw amino-acid sequence, 360 residues long: Protein Wnt-2 (360 aa).

Positions 1–25 are cleaved as a signal peptide; it reads MNAPLGGIWLWLPLLLTWLSPEVSS. Intrachain disulfides connect cysteine 76–cysteine 87, cysteine 127–cysteine 135, cysteine 137–cysteine 157, cysteine 206–cysteine 220, cysteine 208–cysteine 215, cysteine 278–cysteine 309, cysteine 294–cysteine 304, cysteine 308–cysteine 348, cysteine 324–cysteine 339, cysteine 326–cysteine 336, and cysteine 331–cysteine 332. Serine 212 carries the O-palmitoleoyl serine; by PORCN lipid modification. N-linked (GlcNAc...) asparagine glycosylation occurs at asparagine 295.

This sequence belongs to the Wnt family. Post-translationally, palmitoleoylation is required for efficient binding to frizzled receptors. Depalmitoleoylation leads to Wnt signaling pathway inhibition.

Its subcellular location is the secreted. It is found in the extracellular space. The protein resides in the extracellular matrix. In terms of biological role, ligand for members of the frizzled family of seven transmembrane receptors. Probable developmental protein. May be a signaling molecule which affects the development of discrete regions of tissues. Is likely to signal over only few cell diameters. The sequence is that of Protein Wnt-2 (WNT2) from Carollia perspicillata (Seba's short-tailed bat).